Here is a 332-residue protein sequence, read N- to C-terminus: 4-hydroxy-3-methylbut-2-enyl diphosphate reductase (332 aa).

C13 provides a ligand contact to [4Fe-4S] cluster. 2 residues coordinate (2E)-4-hydroxy-3-methylbut-2-enyl diphosphate: H41 and H75. 2 residues coordinate dimethylallyl diphosphate: H41 and H75. Isopentenyl diphosphate is bound by residues H41 and H75. C97 is a [4Fe-4S] cluster binding site. A (2E)-4-hydroxy-3-methylbut-2-enyl diphosphate-binding site is contributed by H125. Residue H125 participates in dimethylallyl diphosphate binding. Position 125 (H125) interacts with isopentenyl diphosphate. Residue E127 is the Proton donor of the active site. Position 168 (T168) interacts with (2E)-4-hydroxy-3-methylbut-2-enyl diphosphate. [4Fe-4S] cluster is bound at residue C229. 4 residues coordinate (2E)-4-hydroxy-3-methylbut-2-enyl diphosphate: S257, S258, N259, and S306. Dimethylallyl diphosphate contacts are provided by S257, S258, N259, and S306. 4 residues coordinate isopentenyl diphosphate: S257, S258, N259, and S306.

The protein belongs to the IspH family. The cofactor is [4Fe-4S] cluster.

The catalysed reaction is isopentenyl diphosphate + 2 oxidized [2Fe-2S]-[ferredoxin] + H2O = (2E)-4-hydroxy-3-methylbut-2-enyl diphosphate + 2 reduced [2Fe-2S]-[ferredoxin] + 2 H(+). It catalyses the reaction dimethylallyl diphosphate + 2 oxidized [2Fe-2S]-[ferredoxin] + H2O = (2E)-4-hydroxy-3-methylbut-2-enyl diphosphate + 2 reduced [2Fe-2S]-[ferredoxin] + 2 H(+). Its pathway is isoprenoid biosynthesis; dimethylallyl diphosphate biosynthesis; dimethylallyl diphosphate from (2E)-4-hydroxy-3-methylbutenyl diphosphate: step 1/1. It participates in isoprenoid biosynthesis; isopentenyl diphosphate biosynthesis via DXP pathway; isopentenyl diphosphate from 1-deoxy-D-xylulose 5-phosphate: step 6/6. Its function is as follows. Catalyzes the conversion of 1-hydroxy-2-methyl-2-(E)-butenyl 4-diphosphate (HMBPP) into a mixture of isopentenyl diphosphate (IPP) and dimethylallyl diphosphate (DMAPP). Acts in the terminal step of the DOXP/MEP pathway for isoprenoid precursor biosynthesis. The chain is 4-hydroxy-3-methylbut-2-enyl diphosphate reductase from Chlorobaculum parvum (strain DSM 263 / NCIMB 8327) (Chlorobium vibrioforme subsp. thiosulfatophilum).